The sequence spans 532 residues: Putative cysteine ligase BshC (532 aa).

Residues 431-451 (MAQAKDALAKVDASLVEAAER) are a coiled coil.

The protein belongs to the BshC family.

The protein is Putative cysteine ligase BshC of Koribacter versatilis (strain Ellin345).